Consider the following 114-residue polypeptide: Putative protein TfaS (114 aa).

This sequence belongs to the tfa family.

The chain is Putative protein TfaS (tfaS) from Escherichia coli (strain K12).